Here is a 508-residue protein sequence, read N- to C-terminus: Photosystem II CP47 reaction center protein (508 aa).

The next 6 membrane-spanning stretches (helical) occupy residues S21–S36, I101–W115, G140–F156, I203–S218, V237–V252, and S457–R472.

The protein belongs to the PsbB/PsbC family. PsbB subfamily. As to quaternary structure, PSII is composed of 1 copy each of membrane proteins PsbA, PsbB, PsbC, PsbD, PsbE, PsbF, PsbH, PsbI, PsbJ, PsbK, PsbL, PsbM, PsbT, PsbX, PsbY, PsbZ, Psb30/Ycf12, at least 3 peripheral proteins of the oxygen-evolving complex and a large number of cofactors. It forms dimeric complexes. Binds multiple chlorophylls. PSII binds additional chlorophylls, carotenoids and specific lipids. is required as a cofactor.

The protein resides in the plastid membrane. Its function is as follows. One of the components of the core complex of photosystem II (PSII). It binds chlorophyll and helps catalyze the primary light-induced photochemical processes of PSII. PSII is a light-driven water:plastoquinone oxidoreductase, using light energy to abstract electrons from H(2)O, generating O(2) and a proton gradient subsequently used for ATP formation. This is Photosystem II CP47 reaction center protein from Cuscuta reflexa (Southern Asian dodder).